Here is a 186-residue protein sequence, read N- to C-terminus: Ribosome-recycling factor (186 aa).

It belongs to the RRF family.

The protein localises to the cytoplasm. Functionally, responsible for the release of ribosomes from messenger RNA at the termination of protein biosynthesis. May increase the efficiency of translation by recycling ribosomes from one round of translation to another. The polypeptide is Ribosome-recycling factor (Acidovorax ebreus (strain TPSY) (Diaphorobacter sp. (strain TPSY))).